Here is a 188-residue protein sequence, read N- to C-terminus: Adenine phosphoribosyltransferase (188 aa).

Belongs to the purine/pyrimidine phosphoribosyltransferase family. In terms of assembly, homodimer.

The protein localises to the cytoplasm. It catalyses the reaction AMP + diphosphate = 5-phospho-alpha-D-ribose 1-diphosphate + adenine. It functions in the pathway purine metabolism; AMP biosynthesis via salvage pathway; AMP from adenine: step 1/1. Functionally, catalyzes a salvage reaction resulting in the formation of AMP, that is energically less costly than de novo synthesis. In Neisseria meningitidis serogroup C (strain 053442), this protein is Adenine phosphoribosyltransferase.